The chain runs to 103 residues: Putative sulfurtransferase YtwF (103 aa).

A Rhodanese domain is found at 17-100 (ADEELYLIDV…GMMAWEGETK (84 aa)). C65 acts as the Cysteine persulfide intermediate in catalysis.

The chain is Putative sulfurtransferase YtwF (ytwF) from Bacillus subtilis (strain 168).